The primary structure comprises 312 residues: Coproporphyrin III ferrochelatase (312 aa).

Fe-coproporphyrin III-binding positions include Tyr-13, Arg-30, 46-47 (RY), Ser-54, and Tyr-125. Residues His-183 and Glu-264 each coordinate Fe(2+).

The protein belongs to the ferrochelatase family.

Its subcellular location is the cytoplasm. It catalyses the reaction Fe-coproporphyrin III + 2 H(+) = coproporphyrin III + Fe(2+). Its pathway is porphyrin-containing compound metabolism; protoheme biosynthesis. Involved in coproporphyrin-dependent heme b biosynthesis. Catalyzes the insertion of ferrous iron into coproporphyrin III to form Fe-coproporphyrin III. In Bacillus pumilus (strain SAFR-032), this protein is Coproporphyrin III ferrochelatase.